We begin with the raw amino-acid sequence, 574 residues long: Developmental and secondary metabolism regulator veA (574 aa).

4 disordered regions span residues 1–22 (MATR…SRIT), 39–60 (ERAR…VDPP), 255–500 (RSSD…GAGK), and 513–540 (RSYE…YPRR). The Velvet domain occupies 25-230 (GKKLTYKLNV…AEQGCRVRIR (206 aa)). A Nuclear localization signal motif is present at residues 39-44 (ERARAC). 2 stretches are compositionally biased toward pro residues: residues 314–323 (RPLPPAPGPA) and 330–341 (PAPPAPPAPPSH). Composition is skewed to polar residues over residues 343 to 353 (PGYQSHLSFGS), 385 to 394 (HARNPSTSAE), 406 to 415 (RMSTERSSYP), and 448 to 458 (VAQSAAPRSQT). The tract at residues 457–501 (QTPSSSLVPSLPPLKALSGDYPNNLSQSSSSTSQSPSHDLGAGKK) is PEST. Low complexity-rich tracts occupy residues 459-474 (PSSS…KALS) and 482-493 (SQSSSSTSQSPS). Over residues 513–525 (RSYEDSFGHDDRP) the composition is skewed to basic and acidic residues.

This sequence belongs to the velvet family. VeA subfamily. In terms of assembly, component of the heterotrimeric velvet complex composed of laeA, veA and velB; VeA acting as a bridging protein between laeA and velB.

Its subcellular location is the nucleus. It localises to the cytoplasm. Component of the velvet transcription factor complex that controls sexual/asexual developmental ratio in response to light, promoting sexual development in the darkness while stimulating asexual sporulation under illumination. The velvet complex hat acts as a global regulator for secondary metabolite gene expression. Controls the expression of the penicillin gene cluster. This Aspergillus oryzae (strain ATCC 42149 / RIB 40) (Yellow koji mold) protein is Developmental and secondary metabolism regulator veA.